A 79-amino-acid polypeptide reads, in one-letter code: U-actitoxin-Avd8a (79 aa).

Positions Met-1–Ala-19 are cleaved as a signal peptide. Positions Asn-20–Arg-36 are excised as a propeptide.

This sequence belongs to the sea anemone 8 toxin family.

The protein localises to the secreted. The protein resides in the nematocyst. In Anemonia viridis (Snakelocks anemone), this protein is U-actitoxin-Avd8a.